A 1192-amino-acid chain; its full sequence is Protein argonaute 13 (1192 aa).

The 114-residue stretch at 183-296 (TVIQFVEEFL…LPMEVCKIVE (114 aa)) folds into the PAZ domain. One can recognise a Piwi domain in the interval 472-770 (LLIVILLEVS…AASHAHCCIK (299 aa)).

The protein belongs to the argonaute family. Ago subfamily.

In terms of biological role, probably involved in the RNA silencing pathway. May bind to short RNAs such as microRNAs (miRNAs) or short interfering RNAs (siRNAs), and represses the translation of mRNAs which are complementary to them. The protein is Protein argonaute 13 (AGO13) of Oryza sativa subsp. japonica (Rice).